A 277-amino-acid chain; its full sequence is 4-hydroxy-3-methylbut-2-enyl diphosphate reductase (277 aa).

C12 lines the [4Fe-4S] cluster pocket. (2E)-4-hydroxy-3-methylbut-2-enyl diphosphate-binding residues include H36 and H70. Dimethylallyl diphosphate-binding residues include H36 and H70. H36 and H70 together coordinate isopentenyl diphosphate. Residue C92 participates in [4Fe-4S] cluster binding. Position 120 (H120) interacts with (2E)-4-hydroxy-3-methylbut-2-enyl diphosphate. H120 lines the dimethylallyl diphosphate pocket. H120 lines the isopentenyl diphosphate pocket. The active-site Proton donor is E122. Position 158 (T158) interacts with (2E)-4-hydroxy-3-methylbut-2-enyl diphosphate. C186 contacts [4Fe-4S] cluster. Positions 214, 216, and 258 each coordinate (2E)-4-hydroxy-3-methylbut-2-enyl diphosphate. Positions 214, 216, and 258 each coordinate dimethylallyl diphosphate. The isopentenyl diphosphate site is built by S214, N216, and S258.

This sequence belongs to the IspH family. Requires [4Fe-4S] cluster as cofactor.

It carries out the reaction isopentenyl diphosphate + 2 oxidized [2Fe-2S]-[ferredoxin] + H2O = (2E)-4-hydroxy-3-methylbut-2-enyl diphosphate + 2 reduced [2Fe-2S]-[ferredoxin] + 2 H(+). The enzyme catalyses dimethylallyl diphosphate + 2 oxidized [2Fe-2S]-[ferredoxin] + H2O = (2E)-4-hydroxy-3-methylbut-2-enyl diphosphate + 2 reduced [2Fe-2S]-[ferredoxin] + 2 H(+). Its pathway is isoprenoid biosynthesis; dimethylallyl diphosphate biosynthesis; dimethylallyl diphosphate from (2E)-4-hydroxy-3-methylbutenyl diphosphate: step 1/1. It participates in isoprenoid biosynthesis; isopentenyl diphosphate biosynthesis via DXP pathway; isopentenyl diphosphate from 1-deoxy-D-xylulose 5-phosphate: step 6/6. In terms of biological role, catalyzes the conversion of 1-hydroxy-2-methyl-2-(E)-butenyl 4-diphosphate (HMBPP) into a mixture of isopentenyl diphosphate (IPP) and dimethylallyl diphosphate (DMAPP). Acts in the terminal step of the DOXP/MEP pathway for isoprenoid precursor biosynthesis. In Campylobacter jejuni subsp. jejuni serotype O:6 (strain 81116 / NCTC 11828), this protein is 4-hydroxy-3-methylbut-2-enyl diphosphate reductase.